We begin with the raw amino-acid sequence, 155 residues long: Phosphoprotein pp24 (155 aa).

Residues 1–50 (MEFEAEHEGLTASWVAPAPQGGKGAEGRAGVADEAGHGKTEAECAEDGEK) are disordered. The segment covering 34–50 (EAGHGKTEAECAEDGEK) has biased composition (basic and acidic residues). The stretch at 76 to 107 (RKRIEAKYMDLLVEAERENKNLRKKYNIILDV) forms a coiled coil.

In Gallus gallus (Chicken), this protein is Phosphoprotein pp24 (MDV008).